Reading from the N-terminus, the 90-residue chain is Large ribosomal subunit protein eL34 (90 aa).

The tract at residues 38–65 (ARCGRPLGGVPRGRPPRVRRLSKTAKRP) is disordered. Over residues 51 to 62 (RPPRVRRLSKTA) the composition is skewed to basic residues.

This sequence belongs to the eukaryotic ribosomal protein eL34 family.

The chain is Large ribosomal subunit protein eL34 (rpl34e) from Aeropyrum pernix (strain ATCC 700893 / DSM 11879 / JCM 9820 / NBRC 100138 / K1).